A 101-amino-acid polypeptide reads, in one-letter code: Small ribosomal subunit protein uS14 (101 aa).

The disordered stretch occupies residues Ala36–Arg61. A compositionally biased stretch (polar residues) spans Lys47–Arg59.

This sequence belongs to the universal ribosomal protein uS14 family. As to quaternary structure, part of the 30S ribosomal subunit. Contacts proteins S3 and S10.

Its function is as follows. Binds 16S rRNA, required for the assembly of 30S particles and may also be responsible for determining the conformation of the 16S rRNA at the A site. The sequence is that of Small ribosomal subunit protein uS14 from Methylobacillus flagellatus (strain ATCC 51484 / DSM 6875 / VKM B-1610 / KT).